We begin with the raw amino-acid sequence, 152 residues long: Lipoprotein signal peptidase (152 aa).

2 helical membrane passes run 55-75 (NKMW…VFYM) and 85-105 (LGIS…DRVF). Residues Asp-111 and Asp-129 contribute to the active site. The chain crosses the membrane as a helical span at residues 124–144 (VFNIADSALCIGVVLIIIQTL).

It belongs to the peptidase A8 family.

Its subcellular location is the cell membrane. The catalysed reaction is Release of signal peptides from bacterial membrane prolipoproteins. Hydrolyzes -Xaa-Yaa-Zaa-|-(S,diacylglyceryl)Cys-, in which Xaa is hydrophobic (preferably Leu), and Yaa (Ala or Ser) and Zaa (Gly or Ala) have small, neutral side chains.. Its pathway is protein modification; lipoprotein biosynthesis (signal peptide cleavage). Functionally, this protein specifically catalyzes the removal of signal peptides from prolipoproteins. In Bacillus cereus (strain G9842), this protein is Lipoprotein signal peptidase.